A 120-amino-acid chain; its full sequence is Small ribosomal subunit protein uS13 (120 aa).

The disordered stretch occupies residues 93–120 (RRGLPCRGQKTKTNARTRKGKRKTVGAA).

It belongs to the universal ribosomal protein uS13 family. Part of the 30S ribosomal subunit. Forms a loose heterodimer with protein S19. Forms two bridges to the 50S subunit in the 70S ribosome.

Its function is as follows. Located at the top of the head of the 30S subunit, it contacts several helices of the 16S rRNA. In the 70S ribosome it contacts the 23S rRNA (bridge B1a) and protein L5 of the 50S subunit (bridge B1b), connecting the 2 subunits; these bridges are implicated in subunit movement. Contacts the tRNAs in the A and P-sites. This is Small ribosomal subunit protein uS13 from Sulfurimonas denitrificans (strain ATCC 33889 / DSM 1251) (Thiomicrospira denitrificans (strain ATCC 33889 / DSM 1251)).